The sequence spans 64 residues: DNA gyrase inhibitor YacG (64 aa).

Cys-9, Cys-12, Cys-28, and Cys-32 together coordinate Zn(2+).

Belongs to the DNA gyrase inhibitor YacG family. Interacts with GyrB. It depends on Zn(2+) as a cofactor.

Its function is as follows. Inhibits all the catalytic activities of DNA gyrase by preventing its interaction with DNA. Acts by binding directly to the C-terminal domain of GyrB, which probably disrupts DNA binding by the gyrase. This is DNA gyrase inhibitor YacG from Enterobacter sp. (strain 638).